A 207-amino-acid polypeptide reads, in one-letter code: Small ribosomal subunit protein uS4 (207 aa).

The segment at 31-55 (KCKLDSKPGQHGRTSGARTSDYGTQ) is disordered. Residues 42 to 53 (GRTSGARTSDYG) show a composition bias toward polar residues. The S4 RNA-binding domain maps to 97–160 (SRLDNVVYRM…KKQARIVEAL (64 aa)).

Belongs to the universal ribosomal protein uS4 family. In terms of assembly, part of the 30S ribosomal subunit. Contacts protein S5. The interaction surface between S4 and S5 is involved in control of translational fidelity.

One of the primary rRNA binding proteins, it binds directly to 16S rRNA where it nucleates assembly of the body of the 30S subunit. Functionally, with S5 and S12 plays an important role in translational accuracy. In Burkholderia orbicola (strain MC0-3), this protein is Small ribosomal subunit protein uS4.